The sequence spans 39 residues: Protein MchX (39 aa).

Residues 15–37 form a helical membrane-spanning segment; the sequence is SALSSTLLLSLIMSATLLEYSLS.

It is found in the cell inner membrane. In terms of biological role, required for microcin H47 production. Possibly involved in a regulatory loop modulating its own expression and that of MchI and MchB. The chain is Protein MchX (mchX) from Escherichia coli.